The following is a 342-amino-acid chain: Anthranilate phosphoribosyltransferase (342 aa).

5-phospho-alpha-D-ribose 1-diphosphate-binding positions include glycine 84, 87-88 (GD), threonine 92, 94-97 (NIST), 112-120 (KHGGRSVSS), and serine 124. Residue glycine 84 coordinates anthranilate. Residue serine 96 participates in Mg(2+) binding. Arginine 170 serves as a coordination point for anthranilate. The Mg(2+) site is built by aspartate 229 and glutamate 230.

It belongs to the anthranilate phosphoribosyltransferase family. In terms of assembly, homodimer. Mg(2+) is required as a cofactor.

The enzyme catalyses N-(5-phospho-beta-D-ribosyl)anthranilate + diphosphate = 5-phospho-alpha-D-ribose 1-diphosphate + anthranilate. It functions in the pathway amino-acid biosynthesis; L-tryptophan biosynthesis; L-tryptophan from chorismate: step 2/5. Functionally, catalyzes the transfer of the phosphoribosyl group of 5-phosphorylribose-1-pyrophosphate (PRPP) to anthranilate to yield N-(5'-phosphoribosyl)-anthranilate (PRA). In Verminephrobacter eiseniae (strain EF01-2), this protein is Anthranilate phosphoribosyltransferase.